Consider the following 366-residue polypeptide: Aminomethyltransferase (366 aa).

It belongs to the GcvT family. In terms of assembly, the glycine cleavage system is composed of four proteins: P, T, L and H.

It carries out the reaction N(6)-[(R)-S(8)-aminomethyldihydrolipoyl]-L-lysyl-[protein] + (6S)-5,6,7,8-tetrahydrofolate = N(6)-[(R)-dihydrolipoyl]-L-lysyl-[protein] + (6R)-5,10-methylene-5,6,7,8-tetrahydrofolate + NH4(+). Its function is as follows. The glycine cleavage system catalyzes the degradation of glycine. The chain is Aminomethyltransferase from Bacillus cereus (strain B4264).